The sequence spans 158 residues: Acetolactate synthase small subunit (158 aa).

Residues 4–79 (MIIAKLHNVT…DVIEVADITD (76 aa)) form the ACT domain.

It belongs to the acetolactate synthase small subunit family. In terms of assembly, dimer of large and small chains.

It catalyses the reaction 2 pyruvate + H(+) = (2S)-2-acetolactate + CO2. Its pathway is amino-acid biosynthesis; L-isoleucine biosynthesis; L-isoleucine from 2-oxobutanoate: step 1/4. The protein operates within amino-acid biosynthesis; L-valine biosynthesis; L-valine from pyruvate: step 1/4. In Lactococcus lactis subsp. lactis (strain IL1403) (Streptococcus lactis), this protein is Acetolactate synthase small subunit (ilvH).